The primary structure comprises 455 residues: Chromosomal replication initiator protein DnaA (455 aa).

The domain I, interacts with DnaA modulators stretch occupies residues 1 to 75 (MDTNNNIEKE…EILSQNKVGM (75 aa)). The segment at 75–106 (MHLAHSVDVRIEVAPKIQISAQPNINYKAVKT) is domain II. The tract at residues 107–321 (SVKDSYTFEN…GAIIKISVNA (215 aa)) is domain III, AAA+ region. The ATP site is built by Gly-151, Gly-153, Lys-154, and Thr-155. The segment at 322–455 (NLMNAPIDLN…DKKTAFHSSE (134 aa)) is domain IV, binds dsDNA.

It belongs to the DnaA family. As to quaternary structure, oligomerizes as a right-handed, spiral filament on DNA at oriC.

Its subcellular location is the cytoplasm. Its function is as follows. Plays an essential role in the initiation and regulation of chromosomal replication. ATP-DnaA binds to the origin of replication (oriC) to initiate formation of the DNA replication initiation complex once per cell cycle. Binds the DnaA box (a 9 base pair repeat at the origin) and separates the double-stranded (ds)DNA. Forms a right-handed helical filament on oriC DNA; dsDNA binds to the exterior of the filament while single-stranded (ss)DNA is stabiized in the filament's interior. The ATP-DnaA-oriC complex binds and stabilizes one strand of the AT-rich DNA unwinding element (DUE), permitting loading of DNA polymerase. After initiation quickly degrades to an ADP-DnaA complex that is not apt for DNA replication. Binds acidic phospholipids. The chain is Chromosomal replication initiator protein DnaA from Helicobacter pylori (strain Shi470).